We begin with the raw amino-acid sequence, 199 residues long: Thymidine kinase (199 aa).

ATP-binding positions include 15–22 (GSMFSGKS) and 88–91 (DEVQ). Glu-89 serves as the catalytic Proton acceptor. Zn(2+) contacts are provided by Cys-145, Cys-148, Cys-183, and His-186.

Belongs to the thymidine kinase family. As to quaternary structure, homotetramer.

It localises to the cytoplasm. The catalysed reaction is thymidine + ATP = dTMP + ADP + H(+). The chain is Thymidine kinase from Staphylococcus aureus (strain Mu50 / ATCC 700699).